The primary structure comprises 1869 residues: Chitin synthase 6 (1869 aa).

The segment at 1–23 (MAMNLPPLAGSGGAHTQPSLPAL) is disordered. The Myosin motor domain occupies 1–778 (MAMNLPPLAG…EIAHLSEASL (778 aa)). 104-111 (GESGSGKS) lines the ATP pocket. N-linked (GlcNAc...) asparagine glycosylation is found at Asn123, Asn417, Asn426, and Asn557. Disordered regions lie at residues 593-612 (KPMR…ARNQ) and 620-640 (AEEE…AAKA). Low complexity predominate over residues 629-640 (ENNSQAGGAAKA). N-linked (GlcNAc...) asparagine glycosylation is found at Asn630 and Asn657. The tract at residues 655–679 (LDNVTKAVADPSTNSYFVFCLKPND) is actin-binding. 2 helical membrane passes run 886 to 906 (WLFM…RFIG) and 925 to 945 (LIIW…PMLI). The Cytochrome b5 heme-binding domain maps to 949–1010 (QHVYSAAELS…YAGKDATSLF (62 aa)). N-linked (GlcNAc...) asparagine glycans are attached at residues Asn1037, Asn1062, and Asn1165. A helical membrane pass occupies residues 1201 to 1221 (LVLAISIMLVTIIAFKFFAAL). 2 N-linked (GlcNAc...) asparagine glycosylation sites follow: Asn1458 and Asn1564. The next 3 membrane-spanning stretches (helical) occupy residues 1596–1616 (LSTV…VMVI), 1622–1642 (VPVT…IIFI), and 1649–1669 (MIGW…GLPL). N-linked (GlcNAc...) asparagine glycosylation occurs at Asn1778. A DEK-C domain is found at 1811–1866 (LPSDDALLAEIREILRTADLMTVTKKGIKQELERRFGVPLDAKRAYINSATEALLS).

In the N-terminal section; belongs to the TRAFAC class myosin-kinesin ATPase superfamily. Myosin family. The protein in the C-terminal section; belongs to the chitin synthase family. Class V subfamily.

The protein resides in the cell membrane. The catalysed reaction is [(1-&gt;4)-N-acetyl-beta-D-glucosaminyl](n) + UDP-N-acetyl-alpha-D-glucosamine = [(1-&gt;4)-N-acetyl-beta-D-glucosaminyl](n+1) + UDP + H(+). Functionally, polymerizes chitin, a structural polymer of the cell wall and septum, by transferring the sugar moiety of UDP-GlcNAc to the non-reducing end of the growing chitin polymer. Plays a role in cell wall integrity and is involved in tolerance to hyperosmotic conditions. Required to successfully penetrate the host plants and thus plays a key role in pathogenicity. This Verticillium dahliae (strain VdLs.17 / ATCC MYA-4575 / FGSC 10137) (Verticillium wilt) protein is Chitin synthase 6.